Here is a 338-residue protein sequence, read N- to C-terminus: L-serine dehydratase (338 aa).

N6-(pyridoxal phosphate)lysine is present on lysine 39.

It belongs to the serine/threonine dehydratase family. It depends on pyridoxal 5'-phosphate as a cofactor.

It is found in the cytoplasm. It carries out the reaction L-serine = pyruvate + NH4(+). Its pathway is carbohydrate biosynthesis; gluconeogenesis. This Saccharomyces cerevisiae (Baker's yeast) protein is L-serine dehydratase (SDL1).